We begin with the raw amino-acid sequence, 85 residues long: Transcriptional repressor protein KorC (85 aa).

A DNA-binding region (H-T-H motif) is located at residues 28-47; it reads VLHLAGLTGGQAARILGLGA.

Its function is as follows. Acts with KorA as corepressor in the control of the kilC and kilE operons. This Escherichia coli protein is Transcriptional repressor protein KorC (korC).